The following is a 347-amino-acid chain: Holliday junction branch migration complex subunit RuvB (347 aa).

The segment at 1 to 181 (MTRNSLLNPE…FGIPVRLQFY (181 aa)) is large ATPase domain (RuvB-L). 9 residues coordinate ATP: leucine 20, arginine 21, glycine 62, lysine 65, threonine 66, threonine 67, arginine 171, tyrosine 181, and arginine 218. Threonine 66 provides a ligand contact to Mg(2+). The segment at 182–252 (SIEELRQVIT…IADEALNRLE (71 aa)) is small ATPAse domain (RuvB-S). Positions 255 to 347 (KLGLDLMDRR…SEIKNQPGLL (93 aa)) are head domain (RuvB-H). Residues arginine 291, arginine 310, and arginine 315 each contribute to the DNA site.

Belongs to the RuvB family. In terms of assembly, homohexamer. Forms an RuvA(8)-RuvB(12)-Holliday junction (HJ) complex. HJ DNA is sandwiched between 2 RuvA tetramers; dsDNA enters through RuvA and exits via RuvB. An RuvB hexamer assembles on each DNA strand where it exits the tetramer. Each RuvB hexamer is contacted by two RuvA subunits (via domain III) on 2 adjacent RuvB subunits; this complex drives branch migration. In the full resolvosome a probable DNA-RuvA(4)-RuvB(12)-RuvC(2) complex forms which resolves the HJ.

The protein resides in the cytoplasm. It catalyses the reaction ATP + H2O = ADP + phosphate + H(+). In terms of biological role, the RuvA-RuvB-RuvC complex processes Holliday junction (HJ) DNA during genetic recombination and DNA repair, while the RuvA-RuvB complex plays an important role in the rescue of blocked DNA replication forks via replication fork reversal (RFR). RuvA specifically binds to HJ cruciform DNA, conferring on it an open structure. The RuvB hexamer acts as an ATP-dependent pump, pulling dsDNA into and through the RuvAB complex. RuvB forms 2 homohexamers on either side of HJ DNA bound by 1 or 2 RuvA tetramers; 4 subunits per hexamer contact DNA at a time. Coordinated motions by a converter formed by DNA-disengaged RuvB subunits stimulates ATP hydrolysis and nucleotide exchange. Immobilization of the converter enables RuvB to convert the ATP-contained energy into a lever motion, pulling 2 nucleotides of DNA out of the RuvA tetramer per ATP hydrolyzed, thus driving DNA branch migration. The RuvB motors rotate together with the DNA substrate, which together with the progressing nucleotide cycle form the mechanistic basis for DNA recombination by continuous HJ branch migration. Branch migration allows RuvC to scan DNA until it finds its consensus sequence, where it cleaves and resolves cruciform DNA. The protein is Holliday junction branch migration complex subunit RuvB of Zymomonas mobilis subsp. mobilis (strain ATCC 31821 / ZM4 / CP4).